The primary structure comprises 314 residues: Dihydroorotate dehydrogenase (fumarate) (314 aa).

Substrate-binding positions include Lys-46, 70–74, and Asn-130; that span reads NSMGL. FMN is bound at residue 46–47; that stretch reads KS. Residue Asn-130 participates in FMN binding. Residues Ser-132 and Cys-133 each act as nucleophile in the active site. FMN is bound by residues Lys-167 and Ile-195. 196–197 contributes to the substrate binding site; the sequence is NS. Residues Gly-224, 252 to 253, and 274 to 275 each bind FMN; these read GG and GT.

This sequence belongs to the dihydroorotate dehydrogenase family. Type 1 subfamily. In terms of assembly, homodimer. FMN is required as a cofactor.

It is found in the cytoplasm. It carries out the reaction (S)-dihydroorotate + fumarate = orotate + succinate. The protein operates within pyrimidine metabolism; UMP biosynthesis via de novo pathway. Functionally, catalyzes the conversion of dihydroorotate to orotate with fumarate as the electron acceptor. This Saccharomyces mikatae (Yeast) protein is Dihydroorotate dehydrogenase (fumarate) (URA1).